Consider the following 425-residue polypeptide: Melibiose permease (425 aa).

At 1 to 13 (MNTTTCTHKDNPN) the chain is on the cytoplasmic side. A helical membrane pass occupies residues 14–34 (FWIFGLFFFLYFFIMATCFPF). Topologically, residues 35 to 50 (LPIWLSDIIGLNKTHT) are periplasmic. A helical transmembrane segment spans residues 51–71 (GIVFSCISLSAIAFQPVLGVI). Over 72–80 (SDKLGLKKH) the chain is Cytoplasmic. A helical transmembrane segment spans residues 81–101 (LLWIISVLLFLFAPFFLYVFA). Residues 102–107 (PLLKTN) are Periplasmic-facing. A helical transmembrane segment spans residues 108-128 (IWLGALSGGLYIGFVFSAGSG). The Cytoplasmic segment spans residues 129-149 (AIEAYIERVSRNSAFEYGKAR). The chain crosses the membrane as a helical span at residues 150–170 (MFGCLGWGLCASTGGILFGID). Position 171 (Pro-171) is a topological domain, periplasmic. Residues 172-192 (SYVFWMGSAAALLLMLLLVVA) form a helical membrane-spanning segment. At 193 to 227 (KPKPNQTAQVMNALGANQPQITAKKVFNLFRQRRM) the chain is on the cytoplasmic side. A helical transmembrane segment spans residues 228–248 (WMFILYVIGVACVYDVFDQQF). Residues 249-267 (ATFFKTFFATPQEGTRAFG) are Periplasmic-facing. A helical transmembrane segment spans residues 268–288 (FATTAGEICNAIIMFCSPWII). The Cytoplasmic segment spans residues 289 to 297 (NRIGAKNTL). The helical transmembrane segment at 298–318 (LIAGLIMATRIIGSSFATTAV) threads the bilayer. Residues 319 to 325 (EVIALKM) are Periplasmic-facing. The helical transmembrane segment at 326 to 346 (LHALEVPFLLVGAFKYITGVF) threads the bilayer. At 347 to 353 (DTRLSAT) the chain is on the cytoplasmic side. A helical membrane pass occupies residues 354–374 (IYLIGFQFAKQSAAIFLSAFA). Topologically, residues 375 to 385 (GNMYDRIGFQE) are periplasmic. A helical membrane pass occupies residues 386-406 (TYLMLGCFVLAITVVSAFTLS). The Cytoplasmic segment spans residues 407–425 (SRQEIAAAAGAAALTSQSR).

Belongs to the major facilitator superfamily. Oligosaccharide:H(+) symporter (OHS) (TC 2.A.1.5) family.

It localises to the cell inner membrane. Responsible for transport of melibiose into the cell, with the concomitant import of a proton (symport system). Can also transport lactose, and has weak activity with maltose. Cannot transport the analog methyl-1-thio-beta,D-galactopyranoside (TMG). The sequence is that of Melibiose permease from Enterobacter cloacae subsp. cloacae (strain ATCC 13047 / DSM 30054 / NBRC 13535 / NCTC 10005 / WDCM 00083 / NCDC 279-56).